We begin with the raw amino-acid sequence, 311 residues long: Methionyl-tRNA formyltransferase (311 aa).

110–113 (SLLP) serves as a coordination point for (6S)-5,6,7,8-tetrahydrofolate.

The protein belongs to the Fmt family.

The enzyme catalyses L-methionyl-tRNA(fMet) + (6R)-10-formyltetrahydrofolate = N-formyl-L-methionyl-tRNA(fMet) + (6S)-5,6,7,8-tetrahydrofolate + H(+). Attaches a formyl group to the free amino group of methionyl-tRNA(fMet). The formyl group appears to play a dual role in the initiator identity of N-formylmethionyl-tRNA by promoting its recognition by IF2 and preventing the misappropriation of this tRNA by the elongation apparatus. The sequence is that of Methionyl-tRNA formyltransferase from Sulfurihydrogenibium sp. (strain YO3AOP1).